We begin with the raw amino-acid sequence, 313 residues long: Cytochrome c biogenesis protein CcsA (313 aa).

Helical transmembrane passes span 9 to 29 (ILTH…LITL), 44 to 64 (GIIV…ISSG), 71 to 91 (LYES…IPYF), 101 to 121 (IIGP…LTEI), 143 to 163 (MILG…LLVI), 217 to 237 (VISL…VWAN), 244 to 264 (WNWD…AIYL), and 278 to 298 (AIVA…VNLL).

This sequence belongs to the CcmF/CycK/Ccl1/NrfE/CcsA family. In terms of assembly, may interact with Ccs1.

Its subcellular location is the plastid. The protein localises to the chloroplast thylakoid membrane. Functionally, required during biogenesis of c-type cytochromes (cytochrome c6 and cytochrome f) at the step of heme attachment. This chain is Cytochrome c biogenesis protein CcsA, found in Nicotiana tomentosiformis (Tobacco).